The chain runs to 157 residues: Thioredoxin 2 (157 aa).

An N-terminal signal peptide occupies residues 1–23 (MKKYIFFFLFSFINFFFVYDVTC). In terms of domain architecture, Thioredoxin spans 46-157 (LRMFKKVPRL…DLIALIKKHL (112 aa)). Residues Cys-82 and Cys-85 each act as nucleophile in the active site. The cysteines at positions 82 and 85 are disulfide-linked.

The protein belongs to the thioredoxin family. As to quaternary structure, monomer. Component of the Plasmodium translocon of exported proteins (PTEX) complex composed of HSP101, EXP2, PTEX150, PTEX88 and TRX2. In terms of processing, the disulfide bond between Cys-82 and Cys-85 acts as a redox-active center and is reduced by thioredoxin reductase TRXR.

It is found in the parasitophorous vacuole membrane. In terms of biological role, participates in various redox reactions through the reversible oxidation of its active center dithiol to a disulfide and catalyzes dithiol-disulfide exchange reactions. As part of the translocon PTEX complex, plays a role in the export of parasite proteins into the host erythrocyte. The translocon PTEX complex is a multi-protein machinery resident in the parasite parasitophorous vacuolar membrane, responsible for protein secretion into host cells. May contribute to the unfolding of proteins containing the PEXEL localization motif before their passage through the translocon or regulate the PTEX complex function. This chain is Thioredoxin 2, found in Plasmodium falciparum (isolate 3D7).